Here is a 590-residue protein sequence, read N- to C-terminus: Protein OS-9 homolog (590 aa).

An N-terminal signal peptide occupies residues Met-1–Ala-19. The segment at Ser-83–Ser-106 is disordered. An N-linked (GlcNAc...) asparagine glycan is attached at Asn-136. Positions Asn-167–Asp-312 constitute an MRH domain. Cys-169 and Cys-182 are oxidised to a cystine. A mannooligosaccharide derivative-binding residues include Trp-176, Trp-177, and Gln-189. Residues Gly-198 to Ala-248 form a disordered region. 2 cysteine pairs are disulfide-bonded: Cys-265-Cys-298 and Cys-280-Cys-310. Positions 266, 272, 294, and 300 each coordinate a mannooligosaccharide derivative. Disordered stretches follow at residues Ala-357–Leu-376, Gly-436–Met-472, and Tyr-545–Leu-590. The segment covering His-446–Lys-455 has biased composition (basic residues). 2 stretches are compositionally biased toward basic and acidic residues: residues Glu-556 to Gly-568 and Glu-579 to Leu-590. The Prevents secretion from ER signature appears at Arg-587 to Leu-590.

It belongs to the OS-9 family. Interacts with missfolded ER lumenal proteins.

The protein resides in the endoplasmic reticulum membrane. In terms of biological role, lectin involved in the quality control of the secretory pathway. As a member of the endoplasmic reticulum-associated degradation lumenal (ERAD-L) surveillance system, targets misfolded endoplasmic reticulum lumenal glycoproteins for degradation. This chain is Protein OS-9 homolog (yos-9), found in Neurospora crassa (strain ATCC 24698 / 74-OR23-1A / CBS 708.71 / DSM 1257 / FGSC 987).